The following is a 316-amino-acid chain: Protein PXR1 (316 aa).

The G-patch domain maps to 25 to 71 (TSRFGHQYLERMGWKPGKGLGLVEHATTSHVKVSIKDDNLGLGSKLA). Positions 146 to 280 (GTTKKRKIDS…DSMLMPKEQL (135 aa)) are disordered. A compositionally biased stretch (basic and acidic residues) spans 179-195 (DRKEKEEKKTEKENSEI). A compositionally biased stretch (basic residues) spans 196–209 (KKKKKEKKEKKEKK). The segment covering 210–240 (EKKDKNEKKEKKDKNEKKEKKDKNEEKEKKE) has biased composition (basic and acidic residues). A compositionally biased stretch (basic residues) spans 241 to 260 (KKEKKEKKDKKDKKDKKDKK). Positions 261 to 270 (EKKEVKEVTR) are enriched in basic and acidic residues.

This sequence belongs to the PINX1 family.

It is found in the nucleus. Its subcellular location is the nucleolus. Involved in rRNA-processing at A0, A1 and A2 sites and negatively regulates telomerase. This chain is Protein PXR1 (PXR1), found in Debaryomyces hansenii (strain ATCC 36239 / CBS 767 / BCRC 21394 / JCM 1990 / NBRC 0083 / IGC 2968) (Yeast).